The chain runs to 191 residues: Transcriptional activator GvpE1 (191 aa).

Residues 31–51 are disordered; that stretch reads SDGASDHADQPPDEGATQRYT. A DNA-binding site is contributed by 140 to 145; the sequence is KRKVYR. The tract at residues 150-181 is leucine-zipper; sequence EGAFTRIDHMVDQLLLFSLVLKAVMTDCKARQ.

Interacts with GvpD.

It is found in the cytoplasm. With respect to regulation, the amount of protein that accumulates is controlled by GvpD; GvpD causes a reduction in the amount of GvpE, preventing accumulation of excessive amounts of gas vesicles. Functionally, plays a regulatory role in gas vesicle synthesis, activates transcription of the gvpA operon, and probably of the gvpD operon. Gas vesicles are hollow, gas filled proteinaceous nanostructures found in several microbial planktonic microorganisms. They allow positioning of halobacteria at the optimal depth for growth in the poorly aerated, shallow brine pools of their habitat. Its function is as follows. Expression of a 9.5 kb p-vac DNA fragment containing 2 divergently transcribed regions (gvpD-gvpE-gvpF-gvpG-gvpH-gvpI-gvpJ-gvpK-gvpL-gvpM and gvpA-gvpC-gvpN-gvpO) allows H.volcanii to produce gas vesicles. A similar region restores gas vesicle production in H.halobium without the p-vac locus, but it still has the c-vac locus. In Halobacterium salinarum (strain ATCC 700922 / JCM 11081 / NRC-1) (Halobacterium halobium), this protein is Transcriptional activator GvpE1 (gvpE11).